Reading from the N-terminus, the 126-residue chain is MKALALIAHDAKKDEMVAFCLRHKDVLARYPLLATGTTGARIQEATGLAVERVLSGPLGGDLQIGARVAEGKVLAVVFLQDPLTAKPHEPDVQALMRVCNVHGVPLATNLVAAEALIAWIRKGTPQ.

One can recognise an MGS-like domain in the interval Met-1–Gln-126. Residues His-9, Lys-13, Thr-35–Thr-38, and Ser-55–Gly-56 each bind substrate. Catalysis depends on Asp-61, which acts as the Proton donor/acceptor. His-88 serves as a coordination point for substrate.

The protein belongs to the methylglyoxal synthase family.

It carries out the reaction dihydroxyacetone phosphate = methylglyoxal + phosphate. Functionally, catalyzes the formation of methylglyoxal from dihydroxyacetone phosphate. The sequence is that of Methylglyoxal synthase from Thermus thermophilus (strain ATCC BAA-163 / DSM 7039 / HB27).